Here is a 401-residue protein sequence, read N- to C-terminus: NADH-quinone oxidoreductase subunit D 2 (401 aa).

It belongs to the complex I 49 kDa subunit family. NDH-1 is composed of 14 different subunits. Subunits NuoB, C, D, E, F, and G constitute the peripheral sector of the complex.

It is found in the cell inner membrane. It carries out the reaction a quinone + NADH + 5 H(+)(in) = a quinol + NAD(+) + 4 H(+)(out). Its function is as follows. NDH-1 shuttles electrons from NADH, via FMN and iron-sulfur (Fe-S) centers, to quinones in the respiratory chain. The immediate electron acceptor for the enzyme in this species is believed to be ubiquinone. Couples the redox reaction to proton translocation (for every two electrons transferred, four hydrogen ions are translocated across the cytoplasmic membrane), and thus conserves the redox energy in a proton gradient. The protein is NADH-quinone oxidoreductase subunit D 2 of Thermodesulfovibrio yellowstonii (strain ATCC 51303 / DSM 11347 / YP87).